The primary structure comprises 233 residues: Putative glutathione peroxidase 7, chloroplastic (233 aa).

The transit peptide at 1–69 (MAFSYASFST…KSKNFSVYAR (69 aa)) directs the protein to the chloroplast. The active site involves cysteine 108.

The protein belongs to the glutathione peroxidase family.

It is found in the plastid. It localises to the chloroplast. The catalysed reaction is 2 glutathione + H2O2 = glutathione disulfide + 2 H2O. May constitute a glutathione peroxidase-like protective system against oxidative stresses. The sequence is that of Putative glutathione peroxidase 7, chloroplastic (GPX7) from Arabidopsis thaliana (Mouse-ear cress).